Here is a 542-residue protein sequence, read N- to C-terminus: Cytochrome P450 79B1 (542 aa).

A helical transmembrane segment spans residues 21–41; that stretch reads FSNMYLLTTLQAFVAITLVML. C478 provides a ligand contact to heme.

It belongs to the cytochrome P450 family. It depends on heme as a cofactor.

The protein localises to the membrane. In terms of biological role, converts tyrosine to para-hydrophenylacetaldoxime in para-hydroxybenzylglucosinolate biosynthesis. The polypeptide is Cytochrome P450 79B1 (CYP79B1) (Sinapis alba (White mustard)).